The chain runs to 197 residues: Glycerol-3-phosphate acyltransferase (197 aa).

The next 5 helical transmembrane spans lie at 7-27 (TLLPLVVGYVLGSVPFGLILT), 55-75 (GLAAATLLLDLGKGLAAVLIV), 78-98 (VWPGAEALAALAAVLGHCFPV), 116-136 (LALAWPIGLVYAVTWLGVLFL), and 157-177 (VLGYAPYVPVLALLALLVLYL).

It belongs to the PlsY family. As to quaternary structure, probably interacts with PlsX.

It is found in the cell inner membrane. The enzyme catalyses an acyl phosphate + sn-glycerol 3-phosphate = a 1-acyl-sn-glycero-3-phosphate + phosphate. It participates in lipid metabolism; phospholipid metabolism. Catalyzes the transfer of an acyl group from acyl-phosphate (acyl-PO(4)) to glycerol-3-phosphate (G3P) to form lysophosphatidic acid (LPA). This enzyme utilizes acyl-phosphate as fatty acyl donor, but not acyl-CoA or acyl-ACP. In Novosphingobium aromaticivorans (strain ATCC 700278 / DSM 12444 / CCUG 56034 / CIP 105152 / NBRC 16084 / F199), this protein is Glycerol-3-phosphate acyltransferase.